A 237-amino-acid polypeptide reads, in one-letter code: Sugar fermentation stimulation protein homolog (237 aa).

The protein belongs to the SfsA family.

The sequence is that of Sugar fermentation stimulation protein homolog from Actinobacillus pleuropneumoniae serotype 3 (strain JL03).